A 435-amino-acid polypeptide reads, in one-letter code: Divergent protein kinase domain 2B (435 aa).

The first 33 residues, 1–33, serve as a signal peptide directing secretion; it reads MESQWRGAAATAFHQHWLARLLLWVSTLSCSFS. Residues asparagine 102 and asparagine 395 are each glycosylated (N-linked (GlcNAc...) asparagine).

Belongs to the DIPK family.

The protein resides in the secreted. The polypeptide is Divergent protein kinase domain 2B (Dipk2b) (Mus musculus (Mouse)).